The sequence spans 507 residues: ATP synthase subunit alpha, chloroplastic (507 aa).

170–177 (GDRQTGKT) provides a ligand contact to ATP. A Phosphothreonine modification is found at threonine 257.

Belongs to the ATPase alpha/beta chains family. As to quaternary structure, F-type ATPases have 2 components, CF(1) - the catalytic core - and CF(0) - the membrane proton channel. CF(1) has five subunits: alpha(3), beta(3), gamma(1), delta(1), epsilon(1). CF(0) has four main subunits: a, b, b' and c.

The protein resides in the plastid. It is found in the chloroplast thylakoid membrane. It catalyses the reaction ATP + H2O + 4 H(+)(in) = ADP + phosphate + 5 H(+)(out). In terms of biological role, produces ATP from ADP in the presence of a proton gradient across the membrane. The alpha chain is a regulatory subunit. The polypeptide is ATP synthase subunit alpha, chloroplastic (Lobularia maritima (Sweet alyssum)).